The following is a 613-amino-acid chain: 8-methylmenaquinol:fumarate reductase flavoprotein subunit (613 aa).

Residues 1-33 (MSEQFTRREFLQSACITMGALAVSTSGVDRAFA) constitute a signal peptide (tat-type signal). FAD is bound by residues 53–58 (GSGAAG), 78–93 (SKVM…AEGG), and Asp255. Residues His276 and Thr288 each contribute to the substrate site. Residue Arg319 is the Proton acceptor of the active site. His387 contacts substrate. Glu413 provides a ligand contact to FAD. A substrate-binding site is contributed by Arg424. 429–430 (SL) provides a ligand contact to FAD.

It belongs to the FAD-dependent oxidoreductase 2 family. FRD/SDH subfamily. The MFR complex is composed of three subunits: a flavoprotein (SdhA), an iron-sulfur protein (SdhB), and one hydrophobic anchor protein (SdhE). It depends on FAD as a cofactor. Post-translationally, predicted to be exported by the Tat system. The position of the signal peptide cleavage has not been experimentally proven.

It localises to the periplasm. The protein resides in the cell membrane. The catalysed reaction is 8-methylmenaquinone-6 + succinate = 8-methylmenaquinol-6 + fumarate. Its function is as follows. Flavoprotein subunit of 8-methylmenaquinol:fumarate reductase (MFR), that catalyzes the reduction of fumarate using 8-methylmenaquinol-6 as electron donor. The complex shows no succinate oxidation activity. Is involved in anaerobic metabolism. SdhA contains the dicarboxylate reduction site. The chain is 8-methylmenaquinol:fumarate reductase flavoprotein subunit from Wolinella succinogenes (strain ATCC 29543 / DSM 1740 / CCUG 13145 / JCM 31913 / LMG 7466 / NCTC 11488 / FDC 602W) (Vibrio succinogenes).